Here is a 317-residue protein sequence, read N- to C-terminus: Melanocyte-stimulating hormone receptor (317 aa).

At 1 to 37 the chain is on the extracellular side; sequence MPVQGSQRRLLGSLNSTPTATPKLGLAANQTGAWCLE. Residue Asn-29 is glycosylated (N-linked (GlcNAc...) asparagine). The helical transmembrane segment at 38-63 threads the bilayer; the sequence is VSIPDGLFLSLGLVSLVENVLVVAAI. The Cytoplasmic portion of the chain corresponds to 64-72; the sequence is AKNRNLHSP. Residues 73–93 form a helical membrane-spanning segment; sequence MYCFICCLALSDLLVSGSNML. Residues 94–118 lie on the Extracellular side of the membrane; that stretch reads ETAVILLLEAGALAARAAVVQQLDN. Residues 119 to 140 form a helical membrane-spanning segment; it reads VIDVITCSSMLSSLCFLGAIAV. Residues 141-163 are Cytoplasmic-facing; it reads DRYISIFYALRYHSIVTLPRAQR. A helical transmembrane segment spans residues 164 to 183; the sequence is VVAAIWVASVLFSTLFIAYY. Residues 184–191 are Extracellular-facing; sequence DHAAVLLC. The helical transmembrane segment at 192 to 211 threads the bilayer; it reads LVVFFLAMLVLMAVLYVHML. Residues 212–240 lie on the Cytoplasmic side of the membrane; it reads ARACQHAQGIAQLHKRQRPAHQGFGLKGA. The chain crosses the membrane as a helical span at residues 241 to 266; it reads ATLTILLGIFFLCWGPFFLHLTLIVL. At 267-279 the chain is on the extracellular side; sequence CPQHPTCSCIFKN. Residues 280-300 traverse the membrane as a helical segment; sequence FNLFLALIICNAIIDPLIYAF. Over 301–317 the chain is Cytoplasmic; sequence RSQELRRTLKEVLLCSW. Cys-315 carries S-palmitoyl cysteine lipidation.

The protein belongs to the G-protein coupled receptor 1 family. As to quaternary structure, interacts with MGRN1, but does not undergo MGRN1-mediated ubiquitination; this interaction competes with GNAS-binding and thus inhibits agonist-induced cAMP production. Interacts with OPN3; the interaction results in a decrease in MC1R-mediated cAMP signaling and ultimately a decrease in melanin production in melanocytes.

It localises to the cell membrane. In terms of biological role, receptor for MSH (alpha, beta and gamma) and ACTH. The activity of this receptor is mediated by G proteins which activate adenylate cyclase. Mediates melanogenesis, the production of eumelanin (black/brown) and phaeomelanin (red/yellow), via regulation of cAMP signaling in melanocytes. This chain is Melanocyte-stimulating hormone receptor (MC1R), found in Colobus guereza (Mantled guereza).